The chain runs to 106 residues: MVTTNRLVLSGTVCKTPVRKVSPSGIPHCQFVLEHRSTQQEAGFSRQTWCRMPIVVSGQQSQALTHSITVGSQLTVEGFISCHQGRNGLNKLVLHAEQIEFIDSGD.

The region spanning 4–103 (TNRLVLSGTV…LHAEQIEFID (100 aa)) is the SSB domain.

This sequence belongs to the PriB family. As to quaternary structure, homodimer. Interacts with PriA and DnaT. Component of the replication restart primosome. Primosome assembly occurs via a 'hand-off' mechanism. PriA binds to replication forks, subsequently PriB then DnaT bind; DnaT then displaces ssDNA to generate the helicase loading substrate.

Involved in the restart of stalled replication forks, which reloads the replicative helicase on sites other than the origin of replication; the PriA-PriB pathway is the major replication restart pathway. During primosome assembly it facilitates complex formation between PriA and DnaT on DNA; stabilizes PriA on DNA. Stimulates the DNA unwinding activity of PriA helicase. The chain is Replication restart protein PriB from Yersinia pestis.